The following is an 886-amino-acid chain: Isoleucine--tRNA ligase (886 aa).

Positions 60-70 (PYANGDIHIGH) match the 'HIGH' region motif. Residue glutamate 546 participates in L-isoleucyl-5'-AMP binding. Residues 587 to 591 (KMSKS) carry the 'KMSKS' region motif. ATP is bound at residue lysine 590. Positions 856, 859, 870, and 873 each coordinate Zn(2+).

This sequence belongs to the class-I aminoacyl-tRNA synthetase family. IleS type 1 subfamily. As to quaternary structure, monomer. Zn(2+) is required as a cofactor.

It localises to the cytoplasm. The catalysed reaction is tRNA(Ile) + L-isoleucine + ATP = L-isoleucyl-tRNA(Ile) + AMP + diphosphate. In terms of biological role, catalyzes the attachment of isoleucine to tRNA(Ile). As IleRS can inadvertently accommodate and process structurally similar amino acids such as valine, to avoid such errors it has two additional distinct tRNA(Ile)-dependent editing activities. One activity is designated as 'pretransfer' editing and involves the hydrolysis of activated Val-AMP. The other activity is designated 'posttransfer' editing and involves deacylation of mischarged Val-tRNA(Ile). This chain is Isoleucine--tRNA ligase, found in Mesomycoplasma hyopneumoniae (strain 7448) (Mycoplasma hyopneumoniae).